We begin with the raw amino-acid sequence, 298 residues long: Transcription factor bHLH114 (298 aa).

Positions 117–149 (LDHEIRNHKSSKEQITQDYKNLTSKRSEELEEN) form a coiled coil. The interval 126 to 154 (SSKEQITQDYKNLTSKRSEELEENSDEYS) is disordered. The span at 129 to 140 (EQITQDYKNLTS) shows a compositional bias: polar residues. A bHLH domain is found at 163 to 212 (LETLSPLPSFKVRKEKLGDRITALQQLVSPFGKTDTASVLNEAVEYIKFL).

Homodimer. As to expression, differentiating root endodermis.

Its subcellular location is the nucleus. This is Transcription factor bHLH114 (BHLH114) from Arabidopsis thaliana (Mouse-ear cress).